Consider the following 587-residue polypeptide: MLRILGRRVVSASKELTSIQQWRIRPGTDSRPDPFRTFRGLQKGFCVGILPDGVDRNSEAFSSNSIAMEGILSELRSHIKKVLAGGGEEAVKRNRSRNKLLPRERIDRLLDPGSSFLELSQLAGHELYEEPLPSGGIITGIGPIHGRICMFMANDPTVKGGTYYPITIKKHLRAQEIAARCRLPCIYLVDSGGAYLPKQAEVFPDKENFGRVFYNESVMSSDGIPQIAIVLGSCTAGGAYIPAMADESVMVKGNGTIFLAGPPLVKAATGEEVSAEDLGGATVHCTVSGVSDYFAQDELHGLAIGRNIVKNLHMAAKQGMEGTFGSKNLVYKEPLYDINELRSIAPVDHKQQFDVRSIIARIVDGSEFDEFKKQYGTTLVTGFARIYGQTVGIIGNNGILFNESALKGAHFIELCSQRKIPLVFLQNITGFMVGSRAEANGIAKAGAKMVMAVSCAKVPKITIITGASFGAGNYAMCGRAYSPDFMFIWPNARIGIMGGAQAAGVLTQIERATKKRQGIKWTEEEEEAFKKKTVDAYEREANPYYSTARLWDDGVIDPCDTRKVLGLCLSAALNRPLEDTRFGVFRM.

Residues 1-26 (MLRILGRRVVSASKELTSIQQWRIRP) constitute a mitochondrion transit peptide. Residues 68-324 (MEGILSELRS…AAKQGMEGTF (257 aa)) form the CoA carboxyltransferase N-terminal domain. The segment at 68–579 (MEGILSELRS…SAALNRPLED (512 aa)) is carboxyltransferase. The region spanning 333 to 579 (EPLYDINELR…SAALNRPLED (247 aa)) is the CoA carboxyltransferase C-terminal domain. Residues 367–396 (EFDEFKKQYGTTLVTGFARIYGQTVGIIGN) form an acyl-CoA binding region.

This sequence belongs to the AccD/PCCB family. Probably a heterodimer composed of biotin-containing alpha subunits and beta subunits. As to expression, in roots, cotyledons, leaves, flowers, ovaries, siliques and embryos.

It is found in the mitochondrion matrix. The catalysed reaction is 3-methylbut-2-enoyl-CoA + hydrogencarbonate + ATP = 3-methyl-(2E)-glutaconyl-CoA + ADP + phosphate + H(+). It functions in the pathway amino-acid degradation; L-leucine degradation; (S)-3-hydroxy-3-methylglutaryl-CoA from 3-isovaleryl-CoA: step 2/3. Carboxyltransferase subunit of the 3-methylcrotonyl-CoA carboxylase, an enzyme that catalyzes the conversion of 3-methylcrotonyl-CoA to 3-methylglutaconyl-CoA, a critical step for leucine and isovaleric acid catabolism. In Arabidopsis thaliana (Mouse-ear cress), this protein is Methylcrotonoyl-CoA carboxylase beta chain, mitochondrial (MCCB).